Here is a 176-residue protein sequence, read N- to C-terminus: Acireductone dioxygenase (176 aa).

4 residues coordinate Fe(2+): His91, His93, Glu97, and His136. Ni(2+) is bound by residues His91, His93, Glu97, and His136.

The protein belongs to the acireductone dioxygenase (ARD) family. In terms of assembly, monomer. Fe(2+) serves as cofactor. It depends on Ni(2+) as a cofactor.

The catalysed reaction is 1,2-dihydroxy-5-(methylsulfanyl)pent-1-en-3-one + O2 = 3-(methylsulfanyl)propanoate + CO + formate + 2 H(+). It catalyses the reaction 1,2-dihydroxy-5-(methylsulfanyl)pent-1-en-3-one + O2 = 4-methylsulfanyl-2-oxobutanoate + formate + 2 H(+). It participates in amino-acid biosynthesis; L-methionine biosynthesis via salvage pathway; L-methionine from S-methyl-5-thio-alpha-D-ribose 1-phosphate: step 5/6. Catalyzes 2 different reactions between oxygen and the acireductone 1,2-dihydroxy-3-keto-5-methylthiopentene (DHK-MTPene) depending upon the metal bound in the active site. Fe-containing acireductone dioxygenase (Fe-ARD) produces formate and 2-keto-4-methylthiobutyrate (KMTB), the alpha-ketoacid precursor of methionine in the methionine recycle pathway. Ni-containing acireductone dioxygenase (Ni-ARD) produces methylthiopropionate, carbon monoxide and formate, and does not lie on the methionine recycle pathway. This Picosynechococcus sp. (strain ATCC 27264 / PCC 7002 / PR-6) (Agmenellum quadruplicatum) protein is Acireductone dioxygenase.